We begin with the raw amino-acid sequence, 207 residues long: Dephospho-CoA kinase (207 aa).

A DPCK domain is found at 10–207 (TLGLTGGIGS…FYLTLRGGQS (198 aa)). Position 18–23 (18–23 (GSGKSA)) interacts with ATP.

It belongs to the CoaE family.

It localises to the cytoplasm. The catalysed reaction is 3'-dephospho-CoA + ATP = ADP + CoA + H(+). The protein operates within cofactor biosynthesis; coenzyme A biosynthesis; CoA from (R)-pantothenate: step 5/5. Functionally, catalyzes the phosphorylation of the 3'-hydroxyl group of dephosphocoenzyme A to form coenzyme A. This chain is Dephospho-CoA kinase, found in Pseudomonas fluorescens (strain ATCC BAA-477 / NRRL B-23932 / Pf-5).